A 1040-amino-acid chain; its full sequence is Contactin-2 (1040 aa).

A signal peptide spans 1–30 (MGTATRRKPHLLLVAAVALVSSSAWSSALG). Ig-like C2-type domains follow at residues 43 to 128 (PLSV…AILR), 133 to 222 (QEFS…SVFS), 239 to 322 (PSIK…GRII), 327 to 411 (PEWL…AELA), 417 to 504 (PDFR…GILS), and 509 to 603 (TKIT…ATVL). Cystine bridges form between Cys61-Cys111, Cys155-Cys207, Cys261-Cys306, and Cys348-Cys395. Residues Asn76, Asn198, and Asn204 are each glycosylated (N-linked (GlcNAc...) asparagine). 4 N-linked (GlcNAc...) asparagine glycosylation sites follow: Asn461, Asn477, Asn498, and Asn525. 4 consecutive Fibronectin type-III domains span residues 610–708 (PPGG…TREA), 713–810 (APSG…SAEE), 815–910 (APTK…TMKP), and 915–1006 (PPGN…NGGT). The disordered stretch occupies residues 694–720 (GEPSGPSSKIRTREAAPSVAPSGLSGG). The Cell attachment site signature appears at 794-796 (RGD). N-linked (GlcNAc...) asparagine glycosylation is found at Asn830, Asn904, Asn918, and Asn940. Positions 894–919 (AGTGPASPSANATTMKPPPRRPPGNI) are disordered. Asn1012 carries the GPI-anchor amidated asparagine lipid modification. Positions 1013 to 1040 (MAVRPAPHPGTVISHSVAMLILIGSLEL) are cleaved as a propeptide — removed in mature form.

The protein belongs to the immunoglobulin superfamily. Contactin family.

The protein localises to the cell membrane. Its function is as follows. In conjunction with another transmembrane protein, CNTNAP2, contributes to the organization of axonal domains at nodes of Ranvier by maintaining voltage-gated potassium channels at the juxtaparanodal region. May be involved in cell adhesion. This chain is Contactin-2 (CNTN2), found in Homo sapiens (Human).